Reading from the N-terminus, the 215-residue chain is Probable transaldolase (215 aa).

Residue lysine 83 is the Schiff-base intermediate with substrate of the active site.

Belongs to the transaldolase family. Type 3B subfamily.

Its subcellular location is the cytoplasm. It catalyses the reaction D-sedoheptulose 7-phosphate + D-glyceraldehyde 3-phosphate = D-erythrose 4-phosphate + beta-D-fructose 6-phosphate. The protein operates within carbohydrate degradation; pentose phosphate pathway; D-glyceraldehyde 3-phosphate and beta-D-fructose 6-phosphate from D-ribose 5-phosphate and D-xylulose 5-phosphate (non-oxidative stage): step 2/3. Its function is as follows. Transaldolase is important for the balance of metabolites in the pentose-phosphate pathway. The sequence is that of Probable transaldolase from Moorella thermoacetica (strain ATCC 39073 / JCM 9320).